The primary structure comprises 158 residues: SsrA-binding protein (158 aa).

The protein belongs to the SmpB family.

The protein resides in the cytoplasm. Its function is as follows. Required for rescue of stalled ribosomes mediated by trans-translation. Binds to transfer-messenger RNA (tmRNA), required for stable association of tmRNA with ribosomes. tmRNA and SmpB together mimic tRNA shape, replacing the anticodon stem-loop with SmpB. tmRNA is encoded by the ssrA gene; the 2 termini fold to resemble tRNA(Ala) and it encodes a 'tag peptide', a short internal open reading frame. During trans-translation Ala-aminoacylated tmRNA acts like a tRNA, entering the A-site of stalled ribosomes, displacing the stalled mRNA. The ribosome then switches to translate the ORF on the tmRNA; the nascent peptide is terminated with the 'tag peptide' encoded by the tmRNA and targeted for degradation. The ribosome is freed to recommence translation, which seems to be the essential function of trans-translation. The chain is SsrA-binding protein from Caldicellulosiruptor saccharolyticus (strain ATCC 43494 / DSM 8903 / Tp8T 6331).